We begin with the raw amino-acid sequence, 72 residues long: uncharacterized protein (72 aa).

Positions 51–72 (AKGGRQKGEVVGVDDQCKEHKE) are disordered.

The protein belongs to the YiiE family.

This is an uncharacterized protein from Escherichia coli O157:H7.